The primary structure comprises 291 residues: Pyridoxal 5'-phosphate synthase subunit PdxS (291 aa).

Residue Asp23 participates in D-ribose 5-phosphate binding. Catalysis depends on Lys80, which acts as the Schiff-base intermediate with D-ribose 5-phosphate. Gly152 contacts D-ribose 5-phosphate. Arg164 contributes to the D-glyceraldehyde 3-phosphate binding site. D-ribose 5-phosphate is bound by residues Gly213 and 234–235 (GS).

This sequence belongs to the PdxS/SNZ family. In terms of assembly, in the presence of PdxT, forms a dodecamer of heterodimers.

It carries out the reaction aldehydo-D-ribose 5-phosphate + D-glyceraldehyde 3-phosphate + L-glutamine = pyridoxal 5'-phosphate + L-glutamate + phosphate + 3 H2O + H(+). It participates in cofactor biosynthesis; pyridoxal 5'-phosphate biosynthesis. Catalyzes the formation of pyridoxal 5'-phosphate from ribose 5-phosphate (RBP), glyceraldehyde 3-phosphate (G3P) and ammonia. The ammonia is provided by the PdxT subunit. Can also use ribulose 5-phosphate and dihydroxyacetone phosphate as substrates, resulting from enzyme-catalyzed isomerization of RBP and G3P, respectively. The chain is Pyridoxal 5'-phosphate synthase subunit PdxS from Bifidobacterium longum (strain DJO10A).